Reading from the N-terminus, the 552-residue chain is Amino-acid acetyltransferase, mitochondrial (552 aa).

The transit peptide at 1–32 directs the protein to the mitochondrion; that stretch reads MIKTWIRCLTTEVRYHQPNAHGRSLVMSVLNS. The N-acetyltransferase domain maps to 379–545; it reads QTGKSDPVSK…LRDYAKYVRD (167 aa).

This sequence belongs to the acetyltransferase family.

It is found in the mitochondrion. The enzyme catalyses L-glutamate + acetyl-CoA = N-acetyl-L-glutamate + CoA + H(+). Its pathway is amino-acid biosynthesis; L-arginine biosynthesis; N(2)-acetyl-L-ornithine from L-glutamate: step 1/4. N-acetylglutamate synthase involved in arginine biosynthesis. The sequence is that of Amino-acid acetyltransferase, mitochondrial (ARG2) from Kluyveromyces lactis (strain ATCC 8585 / CBS 2359 / DSM 70799 / NBRC 1267 / NRRL Y-1140 / WM37) (Yeast).